Here is a 148-residue protein sequence, read N- to C-terminus: MTHSKRNTRKLRGHVSHGHGRVGKHRKHPGGRGMAGPEHHHRINVFKYHPGHIGKHGMRHFHLMRNQYYCPSINLSKLWSLVTEEERQKAQTDKSKVILIDVVKHGYYKVLGKGLLPEVPLVVKAKLFTPTAEKRIKQVGGACVLRAQ.

Residues 1–30 are compositionally biased toward basic residues; the sequence is MTHSKRNTRKLRGHVSHGHGRVGKHRKHPG. Residues 1–38 form a disordered region; that stretch reads MTHSKRNTRKLRGHVSHGHGRVGKHRKHPGGRGMAGPE.

It belongs to the universal ribosomal protein uL15 family.

The protein is Large ribosomal subunit protein uL15 (RPL27A) of Euplotes crassus.